Consider the following 474-residue polypeptide: Tocopherol cyclase, chloroplastic (474 aa).

Residues 1-65 constitute a chloroplast transit peptide; that stretch reads MNLAVAAALP…TPTPQDRSLR (65 aa).

Present in all green tissues, both in bundle sheath and in mesophyll cells.

Its subcellular location is the plastid. It is found in the chloroplast. The catalysed reaction is gamma-tocopherol = 2,3-dimethyl-6-phytylbenzene-1,4-diol. Its pathway is cofactor biosynthesis; tocopherol biosynthesis. Involved in the synthesis of tocopherols (vitamin E), which presumably protect photosynthetic complexes from oxidative stress. Catalyzes the conversion of 2,3-dimethyl-5-phytyl-1,4-hydroquinone (DMPQ) to gamma-tocopherol. The chain is Tocopherol cyclase, chloroplastic from Zea mays (Maize).